The primary structure comprises 203 residues: Potassium channel Cha6605_3372 (203 aa).

The Cytoplasmic segment spans residues 1-7 (MVEAPEQ). A helical membrane pass occupies residues 8-31 (SETGRIEAFSDGVFAIAITLLVLE). The RxxxFSD motif motif lies at 12-18 (RIEAFSD). Residues 32 to 52 (IKVPQHKIVETVGLVSSLLSL) are Extracellular-facing. Residues 37–42 (HKIVET) form a short helix H1 region. Residues 44–50 (GLVSSLL) are short helix H2. A helical transmembrane segment spans residues 53–78 (WPSYLAFLTSFASILVMWVNHHRIFS). The Cytoplasmic portion of the chain corresponds to 79–84 (LVARTD). Residues 85-110 (HAFFYWNGLLLMLVTFVPFPTALLAE) traverse the membrane as a helical segment. The Extracellular portion of the chain corresponds to 111 to 117 (YLIHPQA). A helical membrane pass occupies residues 118–142 (RVAASVYAGIFLAIAIVFNRLWKHA). At 143 to 154 (ATADRLLAQKAD) the chain is on the cytoplasmic side. The helical transmembrane segment at 155-181 (RHEVDAITKQYRFGPGLYLVAFALSFI) threads the bilayer. Residues 182–183 (SV) are Extracellular-facing. A helical membrane pass occupies residues 184-199 (WLSVGVCFVLAIYFAL). The Cytoplasmic portion of the chain corresponds to 200–203 (RSNA).

This sequence belongs to the TMEM175 family. In terms of assembly, homotetramer.

It localises to the membrane. It carries out the reaction K(+)(in) = K(+)(out). Its function is as follows. Potassium channel. The channel is permeable for K(+), Rb(+) and Cs(+), while it is unable to conduct Na(+). This Chamaesiphon minutus (strain ATCC 27169 / PCC 6605) protein is Potassium channel Cha6605_3372.